The chain runs to 368 residues: tRNA 2-selenouridine synthase (368 aa).

Residues 15-138 (FLNQHPIMDV…MRQYLIGVIE (124 aa)) enclose the Rhodanese domain. The active-site S-selanylcysteine intermediate is C98.

It belongs to the SelU family. As to quaternary structure, monomer.

It carries out the reaction 5-methylaminomethyl-2-thiouridine(34) in tRNA + selenophosphate + (2E)-geranyl diphosphate + H2O + H(+) = 5-methylaminomethyl-2-selenouridine(34) in tRNA + (2E)-thiogeraniol + phosphate + diphosphate. It catalyses the reaction 5-methylaminomethyl-2-thiouridine(34) in tRNA + (2E)-geranyl diphosphate = 5-methylaminomethyl-S-(2E)-geranyl-thiouridine(34) in tRNA + diphosphate. The catalysed reaction is 5-methylaminomethyl-S-(2E)-geranyl-thiouridine(34) in tRNA + selenophosphate + H(+) = 5-methylaminomethyl-2-(Se-phospho)selenouridine(34) in tRNA + (2E)-thiogeraniol. The enzyme catalyses 5-methylaminomethyl-2-(Se-phospho)selenouridine(34) in tRNA + H2O = 5-methylaminomethyl-2-selenouridine(34) in tRNA + phosphate. Functionally, involved in the post-transcriptional modification of the uridine at the wobble position (U34) of tRNA(Lys), tRNA(Glu) and tRNA(Gln). Catalyzes the conversion of 2-thiouridine (S2U-RNA) to 2-selenouridine (Se2U-RNA). Acts in a two-step process involving geranylation of 2-thiouridine (S2U) to S-geranyl-2-thiouridine (geS2U) and subsequent selenation of the latter derivative to 2-selenouridine (Se2U) in the tRNA chain. This chain is tRNA 2-selenouridine synthase, found in Shewanella baltica (strain OS155 / ATCC BAA-1091).